Reading from the N-terminus, the 471-residue chain is Indole-3-acetate beta-glucosyltransferase (471 aa).

The active-site Proton acceptor is the His15. An anthocyanidin is bound at residue His15. The active-site Charge relay is Asp107. 9 residues coordinate UDP-alpha-D-glucose: Thr129, Gln344, His359, Trp362, Asn363, Ser364, Glu367, Asp383, and Gln384.

It belongs to the UDP-glycosyltransferase family.

The catalysed reaction is (indol-3-yl)acetate + UDP-alpha-D-glucose = 1-O-(indol-3-ylacetyl)-beta-D-glucose + UDP. Its pathway is plant hormone metabolism; auxin conjugation. In Zea mays (Maize), this protein is Indole-3-acetate beta-glucosyltransferase (IAGLU).